The following is a 148-amino-acid chain: Aspartate 1-decarboxylase (148 aa).

Ser-25 acts as the Schiff-base intermediate with substrate; via pyruvic acid in catalysis. Ser-25 is subject to Pyruvic acid (Ser). Residue Thr-57 coordinates substrate. The active-site Proton donor is the Tyr-58. Position 73–75 (Gly-73–Ala-75) interacts with substrate.

This sequence belongs to the PanD family. As to quaternary structure, heterooctamer of four alpha and four beta subunits. The cofactor is pyruvate. Is synthesized initially as an inactive proenzyme, which is activated by self-cleavage at a specific serine bond to produce a beta-subunit with a hydroxyl group at its C-terminus and an alpha-subunit with a pyruvoyl group at its N-terminus.

Its subcellular location is the cytoplasm. The enzyme catalyses L-aspartate + H(+) = beta-alanine + CO2. Its pathway is cofactor biosynthesis; (R)-pantothenate biosynthesis; beta-alanine from L-aspartate: step 1/1. Catalyzes the pyruvoyl-dependent decarboxylation of aspartate to produce beta-alanine. In Rhodococcus jostii (strain RHA1), this protein is Aspartate 1-decarboxylase.